Here is a 220-residue protein sequence, read N- to C-terminus: Fructose-6-phosphate aldolase (220 aa).

The active-site Schiff-base intermediate with substrate is Lys-85.

It belongs to the transaldolase family. Type 3A subfamily. In terms of assembly, homodecamer.

The protein localises to the cytoplasm. The catalysed reaction is beta-D-fructose 6-phosphate = dihydroxyacetone + D-glyceraldehyde 3-phosphate. Functionally, catalyzes the reversible formation of fructose 6-phosphate from dihydroxyacetone and D-glyceraldehyde 3-phosphate via an aldolization reaction. This is Fructose-6-phosphate aldolase from Salmonella schwarzengrund (strain CVM19633).